The chain runs to 147 residues: Cysteine proteinase inhibitor 2 (147 aa).

A signal peptide spans 1 to 27 (MATMLKVSLVLSLLGFLVIAVVTPSAA). Residues 87–117 (LQFSRVVSAQKQVVAGLKYYLRIEVTQPNGS) form the Cystatin domain. The Secondary area of contact motif lies at 98–102 (QVVAG). An N-linked (GlcNAc...) asparagine glycan is attached at Asn-115.

Belongs to the cystatin family. Phytocystatin subfamily.

The protein localises to the secreted. Specific inhibitor of cysteine proteinases. Probably involved in the regulation of endogenous processes and in defense against pests and pathogens. In Arabidopsis thaliana (Mouse-ear cress), this protein is Cysteine proteinase inhibitor 2 (CYS2).